The sequence spans 455 residues: Virion host shutoff protein (455 aa).

This sequence belongs to the herpesviridae VHS protein family.

The protein localises to the virion. Functionally, minor structural protein that acts as an endoribonuclease during lytic infection. Degrades host mRNAs in the cytoplasm by cutting them at preferred sites, including some in regions of translation initiation. The chain is Virion host shutoff protein (17) from Homo sapiens (Human).